The primary structure comprises 421 residues: Subtilisin-like protease 2 (421 aa).

The N-terminal stretch at 1 to 16 is a signal peptide; sequence MQLLNFGLLLLPFVAG. A propeptide spanning residues 17 to 122 is cleaved from the precursor; it reads DLAPQPEPLL…VHPDQHVYLA (106 aa). In terms of domain architecture, Inhibitor I9 spans 36–122; it reads QYIVTLKEGL…VHPDQHVYLA (87 aa). A Peptidase S8 domain is found at 131–421; that stretch reads RWGLGYMSSK…ERKFTLPKYF (291 aa). Residues Asp-169 and His-201 each act as charge relay system in the active site. Asn-248, Asn-261, and Asn-348 each carry an N-linked (GlcNAc...) asparagine glycan. Ser-357 acts as the Charge relay system in catalysis. Asn-388 carries N-linked (GlcNAc...) asparagine glycosylation.

This sequence belongs to the peptidase S8 family.

It is found in the secreted. Functionally, secreted subtilisin-like serine protease with keratinolytic activity that contributes to pathogenicity. The polypeptide is Subtilisin-like protease 2 (SUB2) (Trichophyton equinum (Horse ringworm fungus)).